A 312-amino-acid chain; its full sequence is Malate dehydrogenase (312 aa).

NAD(+) is bound by residues 12–17 (GAGFTG) and Asp-36. Arg-87 and Arg-93 together coordinate substrate. NAD(+) is bound by residues Asn-100 and 123 to 125 (LTN). A substrate-binding site is contributed by Asn-125. Ser-149 is subject to Phosphoserine. Arg-156 contacts substrate. His-180 (proton acceptor) is an active-site residue.

This sequence belongs to the LDH/MDH superfamily. MDH type 3 family.

The enzyme catalyses (S)-malate + NAD(+) = oxaloacetate + NADH + H(+). In terms of biological role, catalyzes the reversible oxidation of malate to oxaloacetate. The polypeptide is Malate dehydrogenase (Geobacillus thermodenitrificans).